A 173-amino-acid chain; its full sequence is NADH-ubiquinone oxidoreductase chain 6 (173 aa).

5 helical membrane passes run 1 to 21 (MTYFVMFLGFCFILGAVAVAS), 27 to 47 (YGVLGLVVGSVVGCGWLLSLG), 48 to 68 (VSFISLALFLVYLGGMLVVFV), 87 to 107 (VVIYGVGLVLVVLVGIVVGDF), and 139 to 159 (WGAGLFLVAGWGLLLTLFVVL).

The protein belongs to the complex I subunit 6 family.

It is found in the mitochondrion membrane. It catalyses the reaction a ubiquinone + NADH + 5 H(+)(in) = a ubiquinol + NAD(+) + 4 H(+)(out). Functionally, core subunit of the mitochondrial membrane respiratory chain NADH dehydrogenase (Complex I) that is believed to belong to the minimal assembly required for catalysis. Complex I functions in the transfer of electrons from NADH to the respiratory chain. The immediate electron acceptor for the enzyme is believed to be ubiquinone. The polypeptide is NADH-ubiquinone oxidoreductase chain 6 (MT-ND6) (Struthio camelus (Common ostrich)).